We begin with the raw amino-acid sequence, 234 residues long: 3-deoxy-manno-octulosonate cytidylyltransferase (234 aa).

Belongs to the KdsB family.

It is found in the cytoplasm. It carries out the reaction 3-deoxy-alpha-D-manno-oct-2-ulosonate + CTP = CMP-3-deoxy-beta-D-manno-octulosonate + diphosphate. It functions in the pathway nucleotide-sugar biosynthesis; CMP-3-deoxy-D-manno-octulosonate biosynthesis; CMP-3-deoxy-D-manno-octulosonate from 3-deoxy-D-manno-octulosonate and CTP: step 1/1. Its pathway is bacterial outer membrane biogenesis; lipopolysaccharide biosynthesis. In terms of biological role, activates KDO (a required 8-carbon sugar) for incorporation into bacterial lipopolysaccharide in Gram-negative bacteria. The protein is 3-deoxy-manno-octulosonate cytidylyltransferase of Aquifex aeolicus (strain VF5).